We begin with the raw amino-acid sequence, 60 residues long: Large ribosomal subunit protein bL32 (60 aa).

It belongs to the bacterial ribosomal protein bL32 family.

In Streptococcus pneumoniae serotype 19F (strain G54), this protein is Large ribosomal subunit protein bL32.